The chain runs to 434 residues: Glutamyl-tRNA reductase (434 aa).

Substrate contacts are provided by residues 52-55 (TCNR), Ser-115, 120-122 (ETQ), and Gln-126. The Nucleophile role is filled by Cys-53. 195–200 (GAGEMI) serves as a coordination point for NADP(+).

The protein belongs to the glutamyl-tRNA reductase family. In terms of assembly, homodimer.

It carries out the reaction (S)-4-amino-5-oxopentanoate + tRNA(Glu) + NADP(+) = L-glutamyl-tRNA(Glu) + NADPH + H(+). It functions in the pathway porphyrin-containing compound metabolism; protoporphyrin-IX biosynthesis; 5-aminolevulinate from L-glutamyl-tRNA(Glu): step 1/2. Catalyzes the NADPH-dependent reduction of glutamyl-tRNA(Glu) to glutamate 1-semialdehyde (GSA). In Cupriavidus metallidurans (strain ATCC 43123 / DSM 2839 / NBRC 102507 / CH34) (Ralstonia metallidurans), this protein is Glutamyl-tRNA reductase.